Consider the following 133-residue polypeptide: Small ribosomal subunit protein bS6 (133 aa).

This sequence belongs to the bacterial ribosomal protein bS6 family.

Functionally, binds together with bS18 to 16S ribosomal RNA. The protein is Small ribosomal subunit protein bS6 of Chlorobium luteolum (strain DSM 273 / BCRC 81028 / 2530) (Pelodictyon luteolum).